Consider the following 385-residue polypeptide: DNA replication and repair protein RecF (385 aa).

30–37 (GPNGNGKT) contacts ATP.

The protein belongs to the RecF family.

Its subcellular location is the cytoplasm. Functionally, the RecF protein is involved in DNA metabolism; it is required for DNA replication and normal SOS inducibility. RecF binds preferentially to single-stranded, linear DNA. It also seems to bind ATP. The polypeptide is DNA replication and repair protein RecF (Mycobacterium leprae (strain Br4923)).